Consider the following 325-residue polypeptide: Delta(1)-pyrroline-2-carboxylate reductase (325 aa).

The protein belongs to the ornithine cyclodeaminase/mu-crystallin family.

The catalysed reaction is L-proline + NAD(+) = 1-pyrroline-2-carboxylate + NADH + H(+). It catalyses the reaction L-proline + NADP(+) = 1-pyrroline-2-carboxylate + NADPH + H(+). Its function is as follows. Catalyzes the reduction of Delta(1)-pyrroline-2-carboxylate (Pyr2C) to L-proline, using preferentially NADPH over NADH as the electron donor. May be involved in a degradation pathway that converts trans-3-hydroxy-L-proline (t3LHyp) to L-proline. The protein is Delta(1)-pyrroline-2-carboxylate reductase of Bacillus cereus (strain ZK / E33L).